We begin with the raw amino-acid sequence, 219 residues long: Suppressor-of-stellate-like protein (219 aa).

The interval 194 to 219 (SAESPPIKVESSVSKSPSWLRNVPNF) is disordered. Residues 204-219 (SSVSKSPSWLRNVPNF) are compositionally biased toward polar residues.

It belongs to the casein kinase 2 subunit beta family.

This Drosophila melanogaster (Fruit fly) protein is Suppressor-of-stellate-like protein (Ssl).